The primary structure comprises 220 residues: Outer membrane protein assembly factor BamD (220 aa).

The N-terminal stretch at 1–22 (MRLKHFKTFLFITMAIIVIGTG) is a signal peptide. A lipid anchor (N-palmitoyl cysteine) is attached at Cys23. Residue Cys23 is the site of S-diacylglycerol cysteine attachment.

Belongs to the BamD family. In terms of assembly, part of the Bam complex.

It localises to the cell outer membrane. Part of the outer membrane protein assembly complex, which is involved in assembly and insertion of beta-barrel proteins into the outer membrane. The polypeptide is Outer membrane protein assembly factor BamD (Helicobacter pylori (strain ATCC 700392 / 26695) (Campylobacter pylori)).